Here is a 302-residue protein sequence, read N- to C-terminus: MTRHGKNCTAGAVYTYHEKKKDTAASGYGTQNIRLSRDAVKDFDCCCLSLQPCHDPVVTPDGYLYEREAILEYILHQKKEIARQMKAYEKQRGARREEQKELQRAAAQDHVRGFLEKEAAIVSRPLNPFTPKAASAGNGPDDAQPGSSAGPAGKDKDKALPSFWIPSLTPEAKATKLEKPSRIVTCPMSGKPLRMSDLTPVRFTPLDSSVDRVGLITRSERYVCAVTRDSLSNATPCAVLRPSGAVVTLECVEKLIRKDMVDPVTGEKLTDRDIIVLQRGGTGFAGSGVKLQAEKSRPVMQA.

Residue serine 36 is modified to Phosphoserine. Positions 55–75 (DPVVTPDGYLYEREAILEYIL) are U-box-like. A Nuclear localization signal motif is present at residues 78–101 (KKEIARQMKAYEKQRGARREEQKE). Positions 126 to 156 (LNPFTPKAASAGNGPDDAQPGSSAGPAGKDK) are disordered.

It belongs to the NOSIP family. In terms of assembly, interacts with NOS1 and NOS3. Interacts with PP2A holoenzyme, containing PPP2CA, PPP2CB, PPP2R1A and PPP2R2A subunits.

It localises to the cytoplasm. The protein resides in the nucleus. It catalyses the reaction S-ubiquitinyl-[E2 ubiquitin-conjugating enzyme]-L-cysteine + [acceptor protein]-L-lysine = [E2 ubiquitin-conjugating enzyme]-L-cysteine + N(6)-ubiquitinyl-[acceptor protein]-L-lysine.. Its function is as follows. E3 ubiquitin-protein ligase that is essential for proper development of the forebrain, the eye, and the face. Catalyzes monoubiquitination of serine/threonine-protein phosphatase 2A (PP2A) catalytic subunit PPP2CA/PPP2CB. Negatively regulates nitric oxide production by inducing NOS1 and NOS3 translocation to actin cytoskeleton and inhibiting their enzymatic activity. The chain is Nitric oxide synthase-interacting protein (NOSIP) from Bos taurus (Bovine).